We begin with the raw amino-acid sequence, 405 residues long: MTNIREDENIFMFLCEKWILINKNHIWNRINQRINIIADFDRYQRARTISEGQRTENIHRNIYGAVPYDYNLVNLTSTQRNPLGYINASVAEFPEIGRHYIITGAAQDTQIPFFWQMVFEQKSPAIVMLLEDVELGIEKSDKYFPNNTREELKFGIYDITCKEFVKRNILEYRLLEVSVGNETHQVHHYKFHGWTEFNLPKYEDFMAFYNTMKEVGVPLLAVMKNNCMSSFFKKYHHTPPTNAPIIQCSTGGARCGVFIIIDILINLIDNRIKNSYSIEWWMLKVRSKRNHSALTNQQHSFIYDIIIKYIRTRHNQLRHLEKYLEAHANTVRMIDSTNTEDVDKFIKPRDWIVDFDERDRLIGKLQFRKRLKIEKDQVSEQKLVHLKSQLHLFQDTYKYESYVLQ.

In terms of domain architecture, Tyrosine-protein phosphatase spans 30-309; it reads INQRINIIAD…SFIYDIIIKY (280 aa). Cys-248 serves as the catalytic Phosphocysteine intermediate.

The protein belongs to the protein-tyrosine phosphatase family. Expressed in the 2 embryonic head hypodermal cells XXXL/R.

It localises to the cytoplasm. The protein resides in the cell membrane. It catalyses the reaction O-phospho-L-tyrosyl-[protein] + H2O = L-tyrosyl-[protein] + phosphate. In terms of biological role, putative phosphatase which, together with eak-4 and sdf-9, negatively regulates dauer larva formation downstream of insulin-like receptor daf-2 and in parallel of age-1, pdk-1 and akt-1. This chain is Tyrosine-protein phosphatase non-receptor type eak-6, found in Caenorhabditis elegans.